The following is a 441-amino-acid chain: Tol-Pal system protein TolB (441 aa).

An N-terminal signal peptide occupies residues 1–23 (MRNAIATVLLGLAMLLPVGAVQA). Residues 420 to 441 (RNLKPVKTPDGASDPSWSPLQN) form a disordered region.

Belongs to the TolB family. In terms of assembly, the Tol-Pal system is composed of five core proteins: the inner membrane proteins TolA, TolQ and TolR, the periplasmic protein TolB and the outer membrane protein Pal. They form a network linking the inner and outer membranes and the peptidoglycan layer.

Its subcellular location is the periplasm. In terms of biological role, part of the Tol-Pal system, which plays a role in outer membrane invagination during cell division and is important for maintaining outer membrane integrity. This is Tol-Pal system protein TolB from Ruegeria sp. (strain TM1040) (Silicibacter sp.).